A 101-amino-acid chain; its full sequence is Interleukin-8 (101 aa).

The signal sequence occupies residues 1–22; it reads MPSQLRVAVLAAFLLSAVLCEG. Disulfide bonds link Cys-34/Cys-61 and Cys-36/Cys-77.

It belongs to the intercrine alpha (chemokine CxC) family. In terms of assembly, homodimer. Interacts with TNFAIP6 (via Link domain); this interaction interferes with chemokine binding to glycosaminoglycans.

The protein localises to the secreted. In terms of biological role, chemotactic factor that mediates inflammatory response by attracting neutrophils, basophils, and T-cells to clear pathogens and protect the host from infection. Also plays an important role in neutrophil activation. Released in response to an inflammatory stimulus, exerts its effect by binding to the G-protein-coupled receptors CXCR1 and CXCR2, primarily found in neutrophils, monocytes and endothelial cells. G-protein heterotrimer (alpha, beta, gamma subunits) constitutively binds to CXCR1/CXCR2 receptor and activation by IL8 leads to beta and gamma subunits release from Galpha (GNAI2 in neutrophils) and activation of several downstream signaling pathways including PI3K and MAPK pathways. The chain is Interleukin-8 (CXCL8) from Cavia porcellus (Guinea pig).